We begin with the raw amino-acid sequence, 213 residues long: Cytochrome b-c1 complex subunit Rieske, mitochondrial (213 aa).

A mitochondrion-targeting transit peptide spans 1–29 (MSSLAFRTLRNGLGLKSSVRALSTTTTTL). Over 30–47 (SNYQQPDYSSYLNNKSGQ) the chain is Mitochondrial matrix. Residues 48-77 (GSRNFTYFMVGSMGLLSAAGAKSTVEAFLS) traverse the membrane as a helical segment. The Mitochondrial intermembrane segment spans residues 78–213 (SFAASADVLA…FTDDETLLVG (136 aa)). A Rieske domain is found at 116–211 (RHRTADEIEE…YDFTDDETLL (96 aa)). Residues Cys-156, His-158, Cys-175, and His-178 each contribute to the [2Fe-2S] cluster site. A disulfide bond links Cys-161 and Cys-177.

The protein belongs to the Rieske iron-sulfur protein family. In terms of assembly, component of the ubiquinol-cytochrome c oxidoreductase (cytochrome b-c1 complex, complex III, CIII), a multisubunit enzyme composed of 10 subunits. The complex is composed of 3 respiratory subunits cytochrome b (COB), cytochrome c1 (CYT1) and Rieske protein (RIP1), 2 core protein subunits COR1 and QCR2, and 5 low-molecular weight protein subunits QCR6, QCR7, QCR8, QCR9 and QCR10. The complex exists as an obligatory dimer and forms supercomplexes (SCs) in the inner mitochondrial membrane with a monomer or a dimer of cytochrome c oxidase (complex IV, CIV), resulting in 2 different assemblies (supercomplexes III(2)IV and III(2)IV(2)). Requires [2Fe-2S] cluster as cofactor.

The protein resides in the mitochondrion inner membrane. It carries out the reaction a quinol + 2 Fe(III)-[cytochrome c](out) = a quinone + 2 Fe(II)-[cytochrome c](out) + 2 H(+)(out). Component of the ubiquinol-cytochrome c oxidoreductase, a multisubunit transmembrane complex that is part of the mitochondrial electron transport chain which drives oxidative phosphorylation. The complex plays an important role in the uptake of multiple carbon sources present in different host niches. The sequence is that of Cytochrome b-c1 complex subunit Rieske, mitochondrial from Candida albicans (strain SC5314 / ATCC MYA-2876) (Yeast).